Consider the following 362-residue polypeptide: uncharacterized protein (362 aa).

Disordered regions lie at residues 1-117 (MASK…GLNR), 153-172 (SSAPGTSASTSGSPSVGIRK), and 210-266 (RHFD…SSSN). The segment covering 12–23 (AKKEKEIKKEIE) has biased composition (basic and acidic residues). Residues 51–70 (ENDDTDGDGKEEDAQKEDDI) are compositionally biased toward acidic residues. Low complexity-rich tracts occupy residues 100–112 (NSPPSESSSTRNT), 153–167 (SSAPGTSASTSGSPS), and 241–265 (VPPSAVSPAPGSGSSASSGTSTSSS).

This is an uncharacterized protein from Caenorhabditis elegans.